The chain runs to 147 residues: Myoglobin (147 aa).

The Globin domain maps to 2 to 141 (HDAELVLKCW…VIGDIDTYYK (140 aa)). H60 lines the nitrite pocket. Residue H60 participates in O2 binding. H89 contacts heme b.

The protein belongs to the globin family. Monomeric.

It localises to the cytoplasm. The protein localises to the sarcoplasm. The enzyme catalyses Fe(III)-heme b-[protein] + nitric oxide + H2O = Fe(II)-heme b-[protein] + nitrite + 2 H(+). It catalyses the reaction H2O2 + AH2 = A + 2 H2O. Functionally, monomeric heme protein which primary function is to store oxygen and facilitate its diffusion within muscle tissues. Reversibly binds oxygen through a pentacoordinated heme iron and enables its timely and efficient release as needed during periods of heightened demand. Depending on the oxidative conditions of tissues and cells, and in addition to its ability to bind oxygen, it also has a nitrite reductase activity whereby it regulates the production of bioactive nitric oxide. Under stress conditions, like hypoxia and anoxia, it also protects cells against reactive oxygen species thanks to its pseudoperoxidase activity. The protein is Myoglobin (mb) of Cyprinus carpio (Common carp).